Here is a 581-residue protein sequence, read N- to C-terminus: A-type ATP synthase subunit A (581 aa).

Residue 232–239 (GPFGSGKT) coordinates ATP.

The protein belongs to the ATPase alpha/beta chains family. As to quaternary structure, has multiple subunits with at least A(3), B(3), C, D, E, F, H, I and proteolipid K(x).

The protein resides in the cell membrane. It carries out the reaction ATP + H2O + 4 H(+)(in) = ADP + phosphate + 5 H(+)(out). In terms of biological role, component of the A-type ATP synthase that produces ATP from ADP in the presence of a proton gradient across the membrane. The A chain is the catalytic subunit. In Methanocorpusculum labreanum (strain ATCC 43576 / DSM 4855 / Z), this protein is A-type ATP synthase subunit A.